The following is a 93-amino-acid chain: Small ribosomal subunit protein uS19 (93 aa).

It belongs to the universal ribosomal protein uS19 family.

Protein S19 forms a complex with S13 that binds strongly to the 16S ribosomal RNA. In Campylobacter fetus subsp. fetus (strain 82-40), this protein is Small ribosomal subunit protein uS19.